We begin with the raw amino-acid sequence, 199 residues long: NAD(P)H-quinone oxidoreductase chain 6 (199 aa).

The next 5 membrane-spanning stretches (helical) occupy residues 9–29 (IVSF…VVLL), 32–52 (VVYS…LYLL), 61–81 (AQVL…IMLV), 102–122 (LVCA…PWAI), and 143–163 (FLLP…GAIV).

This sequence belongs to the complex I subunit 6 family.

It localises to the membrane. It catalyses the reaction a plastoquinone + NADH + (n+1) H(+)(in) = a plastoquinol + NAD(+) + n H(+)(out). The enzyme catalyses a plastoquinone + NADPH + (n+1) H(+)(in) = a plastoquinol + NADP(+) + n H(+)(out). Functionally, NDH-1 shuttles electrons from NAD(P)H, via FMN and iron-sulfur (Fe-S) centers, to quinones in the respiratory chain. The immediate electron acceptor for the enzyme in this species is believed to be plastoquinone. Couples the redox reaction to proton translocation (for every two electrons transferred, four hydrogen ions are translocated across the cytoplasmic membrane), and thus conserves the redox energy in a proton gradient. This is NAD(P)H-quinone oxidoreductase chain 6 (ndhG) from Leptolyngbya boryana (Plectonema boryanum).